A 132-amino-acid chain; its full sequence is S-protein homolog 15 (132 aa).

An N-terminal signal peptide occupies residues 1–20 (MSRLIFFILVTAIYFVGNEA).

Belongs to the plant self-incompatibility (S1) protein family.

It is found in the secreted. In Arabidopsis thaliana (Mouse-ear cress), this protein is S-protein homolog 15.